A 281-amino-acid polypeptide reads, in one-letter code: NADPH-dependent 7-cyano-7-deazaguanine reductase (281 aa).

Valine 87–serine 89 contacts substrate. Residue serine 89 to lysine 90 coordinates NADPH. Cysteine 188 serves as the catalytic Thioimide intermediate. Residue aspartate 195 is the Proton donor of the active site. Substrate is bound at residue histidine 227–glutamate 228. Arginine 256–glycine 257 serves as a coordination point for NADPH.

This sequence belongs to the GTP cyclohydrolase I family. QueF type 2 subfamily. Homodimer.

Its subcellular location is the cytoplasm. The enzyme catalyses 7-aminomethyl-7-carbaguanine + 2 NADP(+) = 7-cyano-7-deazaguanine + 2 NADPH + 3 H(+). It participates in tRNA modification; tRNA-queuosine biosynthesis. Functionally, catalyzes the NADPH-dependent reduction of 7-cyano-7-deazaguanine (preQ0) to 7-aminomethyl-7-deazaguanine (preQ1). The chain is NADPH-dependent 7-cyano-7-deazaguanine reductase from Aliivibrio salmonicida (strain LFI1238) (Vibrio salmonicida (strain LFI1238)).